Here is a 730-residue protein sequence, read N- to C-terminus: Polyphosphate kinase (730 aa).

The segment covering 1-21 (MMRHDRNVTEIDAETRPDENL) has biased composition (basic and acidic residues). The interval 1 to 39 (MMRHDRNVTEIDAETRPDENLWHSGDSAVGAPPAATPAA) is disordered. Asn86 serves as a coordination point for ATP. Positions 423 and 453 each coordinate Mg(2+). His483 functions as the Phosphohistidine intermediate in the catalytic mechanism. Tyr516, Arg612, and His640 together coordinate ATP.

This sequence belongs to the polyphosphate kinase 1 (PPK1) family. The cofactor is Mg(2+). In terms of processing, an intermediate of this reaction is the autophosphorylated ppk in which a phosphate is covalently linked to a histidine residue through a N-P bond.

The catalysed reaction is [phosphate](n) + ATP = [phosphate](n+1) + ADP. Its function is as follows. Catalyzes the reversible transfer of the terminal phosphate of ATP to form a long-chain polyphosphate (polyP). The chain is Polyphosphate kinase from Mycolicibacterium paratuberculosis (strain ATCC BAA-968 / K-10) (Mycobacterium paratuberculosis).